The following is a 595-amino-acid chain: UvrABC system protein C (595 aa).

Residues 17–94 (IEPGCYLMKD…IKQYQPRYNI (78 aa)) enclose the GIY-YIG domain. The UVR domain occupies 199–234 (KTILHNLEQKMQESSESLDFERAKEYRDLIQHIHNL).

The protein belongs to the UvrC family. As to quaternary structure, interacts with UvrB in an incision complex.

The protein resides in the cytoplasm. Its function is as follows. The UvrABC repair system catalyzes the recognition and processing of DNA lesions. UvrC both incises the 5' and 3' sides of the lesion. The N-terminal half is responsible for the 3' incision and the C-terminal half is responsible for the 5' incision. This Staphylococcus saprophyticus subsp. saprophyticus (strain ATCC 15305 / DSM 20229 / NCIMB 8711 / NCTC 7292 / S-41) protein is UvrABC system protein C.